A 132-amino-acid chain; its full sequence is Insulin-like 3 (132 aa).

A signal peptide spans 1–24 (MSPRPLAWALVLLGAALAVALALG). Disulfide bonds link C36-C117, C48-C130, and C116-C121. A propeptide spans 61–104 (VAGGDRELLQWLEGRHLHGQVSDGDPMLVLVPQALPQASLHHHH) (c peptide like).

The protein belongs to the insulin family. In terms of assembly, heterodimer of a B chain and an A chain linked by two disulfide bonds. As to expression, more strongly expressed in testis than in ovary.

It localises to the secreted. Functionally, seems to play a role in testicular function. May be a trophic hormone with a role in testicular descent in fetal life. Is a ligand for LGR8 receptor. The protein is Insulin-like 3 (INSL3) of Canis lupus familiaris (Dog).